The chain runs to 556 residues: Adenine deaminase (556 aa).

Belongs to the metallo-dependent hydrolases superfamily. Adenine deaminase family. It depends on Mn(2+) as a cofactor.

The catalysed reaction is adenine + H2O + H(+) = hypoxanthine + NH4(+). This is Adenine deaminase from Archaeoglobus fulgidus (strain ATCC 49558 / DSM 4304 / JCM 9628 / NBRC 100126 / VC-16).